We begin with the raw amino-acid sequence, 194 residues long: CMRF35-like molecule 5 (194 aa).

The signal sequence occupies residues 1 to 18 (MWLSPSLLLLILPGYSIA). An Ig-like V-type domain is found at 19–125 (AKITGPTTVN…LGVKVQVTIN (107 aa)). The Extracellular segment spans residues 19 to 165 (AKITGPTTVN…LTRSPLKSTH (147 aa)). Asn28 is a glycosylation site (N-linked (GlcNAc...) asparagine). Cysteines 39 and 107 form a disulfide. The helical transmembrane segment at 166 to 186 (FLFLFLLELPLLLSMLGTVLW) threads the bilayer. The Cytoplasmic portion of the chain corresponds to 187-194 (VNRPQRRS).

It belongs to the CD300 family. Forms complexes with the CD300 family members with exception of CD300c. In terms of processing, N-glycosylated. Expression seems restricted to cells of myeloid lineage.

The protein resides in the cell membrane. This chain is CMRF35-like molecule 5 (CD300LD), found in Homo sapiens (Human).